Consider the following 1358-residue polypeptide: MSYSYAEKKRIRKEFGVLPHILDVPYLLSIQTESYKKFLTADAAKGRLHSGLEIVLKQSFPVESKNGQYELHYVDYQIGEPTFDETECQVRGATYDAPLNVKLRLVVYNKDALPNEKIVEDIREEYVYMGDIPLMTTNGTFIINGTERVVVSQLHRSPGVFFSKDDSEEGAFSARIIPYRGSWLDFEFDSKGIIWARIDRKRKFCATVILKALGYTQEQILENFSESKTITSNSKGFALRLDSLSNMKGELLKFDIVDAQDYVIVKKNKKLTSRDVKKIKDAGVDSVAIDFDLVSTLRVAKDIVNEATGEVIAYANDDVTESLLESCVEVGLLELEVIDFITTERGRYISDTLKYDLTRNTDEALVEIYKVLRPGDPPAAASVKALFEGLFFIESRYSLSDIGRMKLNARLGSDKVSKDIYTLENSDIVGVIEELINIRDGKGKVDDIDHLGNRRVRSVGEMVENQFRIGLYRVEKGIRESMSLVHKDKLMPKDIVNSKPITAAIKEFFTSGALSQFMDQDNPLSEVTHKRRISALGPGGLSRDRAGFEVRDVHATHYGRLCPIETPEGPNIGLINSLASYARVNDYGFLEAPYRKVVDGKVTDEIEYLSAIDEDNYVIAQASTKLDENNYFVEDLIQCRSGGEAIFTESSRVQYMDVSAKQMVSAAAALIPFLEHDDANRVLMGANMQRQAVPTLKSEKPLVGTGMEKIVARDSGNCIIARNAGEVAEVDSNRIVIKVDTEKSQTSNLVDIYSLTKFKRSNKNTCINQRPIVNVGDKVEAGDILADGFAADFGELSLGHNLMVAFMPWNGYNFEDSILLSERIVKDDKYTSIHIEEFTCVARDTKLGPEEITADIPNVSESSLAKLDESGIVHIGANVEAGDILVAKITPKAEQQLTPEERLLRAIFNEKASNVADSSLRMPSGTSGTVINVQVFENDKGGKSKRALKIEKELIDKARKDFDEEFAVIESVVKSSIEQEVVGAKIQKAKGLKKGAILTKEFLATLPFSKWLEISFEDEKLEEKVQNAREYYEEAKIAIDAKFEAKKKSITQSNELSPGVLKTVKVFVAIKKRIQPGDKMAGRHGNKGVVSRVLPVEDMPYMEDGTPVDVCLNPLGIPSRMNIGQILEAHLGLASYGLGKKIEKTLEKTRKAAELRKTLEEIYNSVGDKKVNLEALNDEEILTLCDNLKGGVPIATPVFDGAKEEDIKSLLKIGGFATNGQMKLFDGRTGKPFDRHVTVGYMYMLKLDHLVDDKMHARSTGSYSLVTQQPLGGKAQFGGQRFGEMEVWALQAYGAAYTLREMLTVKSDDIAGRSKMYKNIVDGKLTMNVDVPESFNVLRNEVRALGIDMDFDYSSEEE.

Belongs to the RNA polymerase beta chain family. In terms of assembly, the RNAP catalytic core consists of 2 alpha, 1 beta, 1 beta' and 1 omega subunit. When a sigma factor is associated with the core the holoenzyme is formed, which can initiate transcription.

The catalysed reaction is RNA(n) + a ribonucleoside 5'-triphosphate = RNA(n+1) + diphosphate. Functionally, DNA-dependent RNA polymerase catalyzes the transcription of DNA into RNA using the four ribonucleoside triphosphates as substrates. In Francisella tularensis subsp. mediasiatica (strain FSC147), this protein is DNA-directed RNA polymerase subunit beta.